Here is a 714-residue protein sequence, read N- to C-terminus: Polynucleotide 5'-hydroxyl-kinase NOL9 (714 aa).

Alanine 2 carries the N-acetylalanine modification. The Nucleolar localization signal motif lies at 31–47; it reads RRGRRRFGVLTRVELRR. Positions 80–133 are disordered; it reads ARSRPAPRSPPTPSVPPAPCTASATCSLLNPRNHSTPQSRAGRPVRKVSPNVTQ. Positions 86–98 are enriched in pro residues; it reads PRSPPTPSVPPAP. The span at 107–118 shows a compositional bias: polar residues; the sequence is LLNPRNHSTPQS. Serine 128 is subject to Phosphoserine. Position 322–329 (322–329) interacts with ATP; it reads GACDIGKS. Residues 495 to 714 are interaction with LAS1L; the sequence is FTYEEKESSP…PRHKLRQRRK (220 aa). A Glycyl lysine isopeptide (Lys-Gly) (interchain with G-Cter in SUMO2) cross-link involves residue lysine 500. At serine 502 the chain carries Phosphoserine.

Belongs to the Clp1 family. NOL9/GRC3 subfamily. Interacts with PELP1, WDR18 and SENP3. Interacts with LAS1L to form an ITS2 pre-rRNA endonuclease-kinase complex.

The protein localises to the nucleus. It is found in the nucleolus. The enzyme catalyses a 5'-end dephospho-2'-deoxyribonucleoside-DNA + ATP = a 5'-end 5'-phospho-2'-deoxyribonucleoside-DNA + ADP + H(+). It catalyses the reaction a 5'-end dephospho-ribonucleoside-RNA + ATP = a 5'-end 5'-phospho-ribonucleoside-RNA + ADP + H(+). In terms of biological role, polynucleotide kinase that can phosphorylate the 5'-hydroxyl groups of single-stranded and double-stranded RNA and DNA substrates. Involved in rRNA processing and its kinase activity is required for the processing of the 32S precursor into 5.8S and 28S rRNAs, more specifically for the generation of the major 5.8S(S) form. Required for the efficient pre-rRNA processing of internal transcribed spacer 2 (ITS2). Associates with LAS1L to form an ITS2 pre-rRNA endonuclease-kinase complex and is responsible for the transport of this complex into the nucleolus. The polypeptide is Polynucleotide 5'-hydroxyl-kinase NOL9 (Mus musculus (Mouse)).